The following is a 130-amino-acid chain: Lysozyme C (130 aa).

In terms of domain architecture, C-type lysozyme spans 2-130 (KVYGRCELAA…VNVWIRGCRL (129 aa)). Disulfide bonds link C7/C128, C31/C116, C65/C81, and C77/C95. Catalysis depends on residues E36 and D53.

This sequence belongs to the glycosyl hydrolase 22 family. Monomer.

The protein localises to the secreted. The catalysed reaction is Hydrolysis of (1-&gt;4)-beta-linkages between N-acetylmuramic acid and N-acetyl-D-glucosamine residues in a peptidoglycan and between N-acetyl-D-glucosamine residues in chitodextrins.. Its function is as follows. Lysozymes have primarily a bacteriolytic function; those in tissues and body fluids are associated with the monocyte-macrophage system and enhance the activity of immunoagents. This is Lysozyme C (LYZ) from Phasianus versicolor (Green pheasant).